Reading from the N-terminus, the 161-residue chain is Large ribosomal subunit protein uL11 (161 aa).

This sequence belongs to the universal ribosomal protein uL11 family. In terms of assembly, part of the ribosomal stalk of the 50S ribosomal subunit. Interacts with L10 and the large rRNA to form the base of the stalk. L10 forms an elongated spine to which L12 dimers bind in a sequential fashion forming a multimeric L10(L12)X complex.

In terms of biological role, forms part of the ribosomal stalk which helps the ribosome interact with GTP-bound translation factors. The protein is Large ribosomal subunit protein uL11 of Methanosarcina barkeri (strain Fusaro / DSM 804).